An 854-amino-acid polypeptide reads, in one-letter code: MAELSANYNYLENEPKWQDDWQKKNIYQWNSTLPKDKTFIVDPPPPTVSGDLHIGHAMSFIQLDCIVRYQRMLGKNIFFPIGFDDNGLPTERFVEKIKNVRASNIARPDFIKMCQEVVIAKEGEFCKFLNAIGLSVDWSLKYQTISSLSCKISQMSFLDLVNKNQVYRNHQPVLWDCIDQTALSQADVEDKERITSMYYIAFAVMNSELKVQIATTRPEMLPACCAIFFNPNDIRYQHLHNQFAITPLFKSVVPILAEETVDINKGSGLVMCCTFGDTKDVAWWRKHNLPTRIIIDYYGKVKPLDFTVSSQNQEKFTEYYNQITGLKIAQARNKVVELLHHNQLIIKQEQISQTVKQAERSGAILEIIMAPQWFIKVVEHKDALLQKSQELEWYPKSMKIKLDNWINSLAWDWCISRQRYFGIPFPVWYSKREGEEGKIIFADISQLPVDPLYDLPAGYSKDEVIPDSDVMDTWATSSLSPQLSSHGISSNLTIDSTRHNQLFPADLRSQAHEIIRTWTFYTIVKSYLHQNSLPWSKIMISGWCLADDRKKMSKSKGNIILPTELIKRYGADAVRYWALTSQLGHDCVVSEQVIGIGKKLVNKLWNAARFILQHITGKLTAEFLISAKHCVEKKVISCTTDLWMLSKLQDTVNNTSNLLNNYEYASARLYVEEFFLKDFCDNYLELVKSRIYDHSSEYQKSAIYSVFWGLKTILELFAPFVPFITEELYAAIYQSNNLCNGSIHSSNKWPLAQNFYNDELILTTGNLAINILTLVRKSKSARKLSVKAPISLLQVKYDSDSYQQLPSDLVDDLKLVTNSNEFSIVTNFTTIDDLITGDGITVNIVYPGSMKHEC.

The 'HIGH' region motif lies at 46–56; that stretch reads PTVSGDLHIGH. The 'KMSKS' region signature appears at 551 to 555; the sequence is KMSKS. K554 serves as a coordination point for ATP.

It belongs to the class-I aminoacyl-tRNA synthetase family. ValS type 2 subfamily. As to quaternary structure, monomer.

It localises to the cytoplasm. It catalyses the reaction tRNA(Val) + L-valine + ATP = L-valyl-tRNA(Val) + AMP + diphosphate. Catalyzes the attachment of valine to tRNA(Val). As ValRS can inadvertently accommodate and process structurally similar amino acids such as threonine, to avoid such errors, it has a 'posttransfer' editing activity that hydrolyzes mischarged Thr-tRNA(Val) in a tRNA-dependent manner. In Orientia tsutsugamushi (strain Boryong) (Rickettsia tsutsugamushi), this protein is Valine--tRNA ligase.